We begin with the raw amino-acid sequence, 530 residues long: Alpha-(1,3)-fucosyltransferase 4 (530 aa).

Disordered stretches follow at residues 1-48 (MRRL…RAVP) and 66-112 (HLGG…STPA). Residues 1–147 (MRRLWGAARK…GGRRGWRRGR (147 aa)) are Cytoplasmic-facing. The segment covering 88 to 106 (ASGERQRRLEPQLQHESRC) has biased composition (basic and acidic residues). A helical; Signal-anchor for type II membrane protein transmembrane segment spans residues 148 to 172 (GLPWTVCVLAAAGLTCTALITYACW). At 173-530 (GQLPPLPWAS…IRNLASWFER (358 aa)) the chain is on the lumenal side. N-linked (GlcNAc...) asparagine glycosylation is found at Asn-216 and Asn-315.

This sequence belongs to the glycosyltransferase 10 family. As to expression, expressed at low levels in bone marrow-derived mesenchymal stem cells. In terms of tissue distribution, expressed in cord blood immature promyelocytes and in peripheral blood myeloid and lymphoid cell populations.

The protein resides in the golgi apparatus. It localises to the golgi stack membrane. It catalyses the reaction a beta-D-galactosyl-(1-&gt;4)-N-acetyl-beta-D-glucosaminyl derivative + GDP-beta-L-fucose = a beta-D-galactosyl-(1-&gt;4)-[alpha-L-fucosyl-(1-&gt;3)]-N-acetyl-beta-D-glucosaminyl derivative + GDP + H(+). The catalysed reaction is an N-acetyl-alpha-neuraminyl-(2-&gt;3)-beta-D-galactosyl-(1-&gt;4)-N-acetyl-beta-D-glucosaminyl derivative + GDP-beta-L-fucose = an alpha-Neu5Ac-(2-&gt;3)-beta-D-Gal-(1-&gt;4)-[alpha-L-Fuc-(1-&gt;3)]-beta-D-GlcNAc derivative + GDP + H(+). The enzyme catalyses an alpha-Neu5Ac-(2-&gt;3)-beta-D-Gal-(1-&gt;4)-beta-D-GlcNAc-(1-&gt;3)-beta-D-Gal-(1-&gt;4)-beta-D-GlcNAc derivative + GDP-beta-L-fucose = an alpha-Neu5Ac-(2-&gt;3)-beta-D-Gal-(1-&gt;4)-beta-D-GlcNAc-(1-&gt;3)-beta-D-Gal-(1-&gt;4)-[alpha-L-Fuc-(1-&gt;3)]-beta-D-GlcNAc derivative + GDP + H(+). It carries out the reaction an alpha-Neu5Ac-(2-&gt;3)-beta-D-Gal-(1-&gt;4)-beta-D-GlcNAc6S derivative + GDP-beta-L-fucose = an alpha-Neu5Ac-(2-&gt;3)-beta-D-Gal-(1-&gt;4)-[alpha-L-Fuc-(1-&gt;3)]-beta-D-GlcNAc6S derivative + GDP + H(+). It functions in the pathway protein modification; protein glycosylation. In terms of biological role, catalyzes alpha(1-&gt;3) linkage of fucosyl moiety transferred from GDP-beta-L-fucose to N-acetyl glucosamine (GlcNAc) within type 2 lactosamine (LacNAc, Gal-beta(1-&gt;4)GlcNAc) glycan attached to N- or O-linked glycoproteins. Robustly fucosylates nonsialylated distal LacNAc unit of the polylactosamine chain to form Lewis X antigen (CD15), a glycan determinant known to mediate important cellular functions in development and immunity. Fucosylates with lower efficiency sialylated LacNAc acceptors to form sialyl Lewis X and 6-sulfo sialyl Lewis X determinants that serve as recognition epitopes for C-type lectins. Together with FUT7 contributes to SELE, SELL and SELP selectin ligand biosynthesis and selectin-dependent lymphocyte homing, leukocyte migration and blood leukocyte homeostasis. In a cell type specific manner, may also fucosylate the internal LacNAc unit of the polylactosamine chain to form VIM-2 antigen that serves as recognition epitope for SELE. Its function is as follows. Does not generate Lewis X antigens. This chain is Alpha-(1,3)-fucosyltransferase 4, found in Homo sapiens (Human).